The following is a 1147-amino-acid chain: Myosin light chain kinase, smooth muscle (1147 aa).

The actin-binding stretch occupies residues 1–41 (MDFRANLQRQVKPKTVSEEERKVHSPQQVDFRSVLAKKGTP). The interval 1–330 (MDFRANLQRQ…PPASPGTAPT (330 aa)) is disordered. The tract at residues 26–41 (PQQVDFRSVLAKKGTP) is calmodulin-binding. Positions 43–55 (TPVPEKAPPPKPA) are enriched in pro residues. A run of 2 repeats spans residues 100 to 111 (SLKPVANAKPAE) and 112 to 123 (TLKPVANTKPAE). The interval 100–288 (SLKPVANAKP…KAVANAKPAE (189 aa)) is 16 X 12 AA tandem repeats. One copy of the 3; truncated repeat lies at 124–132 (TLKPVANAE). 13 repeat units span residues 133 to 144 (TLKPMGNAKPAE), 145 to 156 (SSKPVGNTKPAE), 157 to 168 (TLKPVGNTKPAE), 169 to 180 (TLKPVGNIKPAE), 181 to 192 (TLKPVGNIKPAE), 193 to 204 (TLKPVGNTKPTE), 205 to 216 (TLKPVANAKSAE), 217 to 228 (TLKPIANTKPAE), 229 to 240 (TLKPVGNAKPAE), 241 to 252 (TLKPVGNAKPAE), 253 to 264 (TLKPVGNAKPAE), 265 to 276 (TLKPVGNAKPAE), and 277 to 288 (TLKAVANAKPAE). Positions 292-692 (PAGKEELKKE…TVTVNTEQKV (401 aa)) are actin-binding (calcium/calmodulin-insensitive). Positions 293-320 (AGKEELKKEVQNDVNCKREKAGAADNEK) are enriched in basic and acidic residues. Ig-like C2-type domains follow at residues 329 to 417 (PTFK…CHVT) and 469 to 557 (PQIP…VNLT). The cysteines at positions 350 and 401 are disulfide-linked. 2 disordered regions span residues 424–476 (SENA…QFPE) and 644–678 (SEPSQESELTTVGEKPEEPKDEVEEVSDDDEKEPE). Over residues 459–472 (PKTPPKAATPPQIP) the composition is skewed to pro residues. Residues 565–657 (PAGTPCASDI…QESELTTVGE (93 aa)) enclose the Fibronectin type-III domain. The segment covering 644–653 (SEPSQESELT) has biased composition (polar residues). The segment covering 662–677 (PKDEVEEVSDDDEKEP) has biased composition (acidic residues). Serine 670 carries the post-translational modification Phosphoserine. Residue tyrosine 681 is modified to Phosphotyrosine; by ABL1. Residues 696-951 (YDIEERLGSG…CTQCLQHPWL (256 aa)) form the Protein kinase domain. ATP-binding positions include 702-710 (LGSGKFGQV) and lysine 725. Position 807 is a phosphotyrosine; by ABL1 (tyrosine 807). Residue aspartate 817 is the Proton acceptor of the active site. Residue tyrosine 867 is modified to Phosphotyrosine; by ABL1. Residues 943 to 1006 (TQCLQHPWLM…SGLSGRKSST (64 aa)) form a calmodulin-binding region. Phosphoserine occurs at positions 991, 992, 1004, 1005, and 1008. Positions 999–1019 (LSGRKSSTGSPTSPLTAERLE) are disordered. Residues 1002-1013 (RKSSTGSPTSPL) show a composition bias toward polar residues. Phosphothreonine is present on threonine 1010. Position 1011 is a phosphoserine (serine 1011). Positions 1041–1130 (PYFSKTIRDL…GEATCTAELI (90 aa)) constitute an Ig-like C2-type 3 domain. A disulfide bridge links cysteine 1062 with cysteine 1114.

This sequence belongs to the protein kinase superfamily. CAMK Ser/Thr protein kinase family. All isoforms including Telokin bind calmodulin. Interacts with SVIL. Interacts with CTTN; this interaction is reduced during thrombin-induced endothelial cell (EC) contraction but is promoted by the barrier-protective agonist sphingosine 1-phosphate (S1P) within lamellipodia. A complex made of ABL1, CTTN and MYLK regulates cortical actin-based cytoskeletal rearrangement critical to sphingosine 1-phosphate (S1P)-mediated endothelial cell (EC) barrier enhancement. Binds to NAA10/ARD1 and PTK2B/PYK2. Requires Mg(2+) as cofactor. Ca(2+) is required as a cofactor. Post-translationally, the C-terminus is deglutamylated by AGTPBP1/CCP1, AGBL1/CCP4 and AGBL4/CCP6, leading to the formation of Myosin light chain kinase, smooth muscle, deglutamylated form. The consequences of C-terminal deglutamylation are unknown. Can probably be down-regulated by phosphorylation. Tyrosine phosphorylation by ABL1 increases kinase activity, reverses MLCK-mediated inhibition of Arp2/3-mediated actin polymerization, and enhances CTTN-binding. Phosphorylation by SRC promotes CTTN binding. In terms of tissue distribution, isoform Telokin is found in all smooth muscle tested except the aorta. It is not present in non-muscle tissue.

Its subcellular location is the cytoplasm. The protein resides in the cell projection. It is found in the lamellipodium. It localises to the cleavage furrow. The protein localises to the cytoskeleton. Its subcellular location is the stress fiber. The catalysed reaction is L-seryl-[myosin light chain] + ATP = O-phospho-L-seryl-[myosin light chain] + ADP + H(+). It carries out the reaction L-threonyl-[myosin light chain] + ATP = O-phospho-L-threonyl-[myosin light chain] + ADP + H(+). Its activity is regulated as follows. All catalytically active isoforms require binding to calcium and calmodulin for activation. Calcium/calmodulin-dependent myosin light chain kinase implicated in smooth muscle contraction via phosphorylation of myosin light chains (MLC). Also regulates actin-myosin interaction through a non-kinase activity. Phosphorylates PTK2B/PYK2 and myosin light-chains. Involved in the inflammatory response (e.g. apoptosis, vascular permeability, leukocyte diapedesis), cell motility and morphology, airway hyperreactivity and other activities relevant to asthma. Required for tonic airway smooth muscle contraction that is necessary for physiological and asthmatic airway resistance. Necessary for gastrointestinal motility. Implicated in the regulation of endothelial as well as vascular permeability, probably via the regulation of cytoskeletal rearrangements. In the nervous system it has been shown to control the growth initiation of astrocytic processes in culture and to participate in transmitter release at synapses formed between cultured sympathetic ganglion cells. Critical participant in signaling sequences that result in fibroblast apoptosis. Plays a role in the regulation of epithelial cell survival. Required for epithelial wound healing, especially during actomyosin ring contraction during purse-string wound closure. Mediates RhoA-dependent membrane blebbing. Triggers TRPC5 channel activity in a calcium-dependent signaling, by inducing its subcellular localization at the plasma membrane. Promotes cell migration (including tumor cells) and tumor metastasis. PTK2B/PYK2 activation by phosphorylation mediates ITGB2 activation and is thus essential to trigger neutrophil transmigration during acute lung injury (ALI). May regulate optic nerve head astrocyte migration. Probably involved in mitotic cytoskeletal regulation. Regulates tight junction probably by modulating ZO-1 exchange in the perijunctional actomyosin ring. Mediates burn-induced microvascular barrier injury; triggers endothelial contraction in the development of microvascular hyperpermeability by phosphorylating MLC. Essential for intestinal barrier dysfunction. Mediates Giardia spp.-mediated reduced epithelial barrier function during giardiasis intestinal infection via reorganization of cytoskeletal F-actin and tight junctional ZO-1. Necessary for hypotonicity-induced Ca(2+) entry and subsequent activation of volume-sensitive organic osmolyte/anion channels (VSOAC) in cervical cancer cells. The polypeptide is Myosin light chain kinase, smooth muscle (MYLK) (Oryctolagus cuniculus (Rabbit)).